The following is a 137-amino-acid chain: MSKDSVETNTIINTIDNTNDNTTNITKKNSVEEIITLNDFSTALGDESKGLVIIDFFTTWCGPCKRIAPDYIRMAEKYPTVSFYKINAENENLANIVAACEIVSLPTFCFFKAGKYIGRFVNADPVGLEKSIVESSQ.

The Thioredoxin domain occupies 2 to 137 (SKDSVETNTI…LEKSIVESSQ (136 aa)). Active-site nucleophile residues include cysteine 61 and cysteine 64. Cysteine 61 and cysteine 64 are disulfide-bonded.

This sequence belongs to the thioredoxin family.

Its function is as follows. Participates in various redox reactions through the reversible oxidation of its active center dithiol to a disulfide and catalyzes dithiol-disulfide exchange reactions. This Acanthamoeba polyphaga mimivirus (APMV) protein is Thioredoxin-like protein R548.